The following is a 98-amino-acid chain: DNA-binding protein Fis (98 aa).

A DNA-binding region (H-T-H motif) is located at residues 74 to 93 (QTRAALMMGINRGTLRKKLK).

It belongs to the transcriptional regulatory Fis family. As to quaternary structure, homodimer.

In terms of biological role, activates ribosomal RNA transcription. Plays a direct role in upstream activation of rRNA promoters. This is DNA-binding protein Fis from Yersinia enterocolitica serotype O:8 / biotype 1B (strain NCTC 13174 / 8081).